Reading from the N-terminus, the 104-residue chain is MIRKAFVMQVNPDAHEEYQHRHNPIWPELEVVLKSHGAHNYAIYLDKARNLLFATVEIESEERWNAVASTDVCQRWWKYMTDVMPANPNNSPVSSELQEVFYLP.

Tyr-18 serves as a coordination point for substrate. The active-site Proton donor is the His-22. Residues Tyr-41 and Trp-76–Trp-77 contribute to the substrate site.

It belongs to the rhamnose mutarotase family. Homodimer.

It localises to the cytoplasm. The catalysed reaction is alpha-L-rhamnose = beta-L-rhamnose. It participates in carbohydrate metabolism; L-rhamnose metabolism. Functionally, involved in the anomeric conversion of L-rhamnose. The polypeptide is L-rhamnose mutarotase (Escherichia fergusonii (strain ATCC 35469 / DSM 13698 / CCUG 18766 / IAM 14443 / JCM 21226 / LMG 7866 / NBRC 102419 / NCTC 12128 / CDC 0568-73)).